A 101-amino-acid chain; its full sequence is Apolipoprotein C-II (101 aa).

An N-terminal signal peptide occupies residues 1-22 (MGTRYFLVGFLILLVLGFEAQG). Residues 66–74 (TVDEKIRDI) form a lipid binding region. The interval 78–101 (STAAVTTYAGIITDQVFSILSGED) is lipoprotein lipase cofactor.

This sequence belongs to the apolipoprotein C2 family. Proapolipoprotein C-II is synthesized as a sialic acid containing glycoprotein which is subsequently desialylated prior to its proteolytic processing. In terms of processing, proapolipoprotein C-II, the major form found in plasma undergoes proteolytic cleavage of its N-terminal hexapeptide to generate apolipoprotein C-II, which occurs as the minor form in plasma.

It is found in the secreted. Functionally, component of chylomicrons, very low-density lipoproteins (VLDL), low-density lipoproteins (LDL), and high-density lipoproteins (HDL) in plasma. Plays an important role in lipoprotein metabolism as an activator of lipoprotein lipase. Both proapolipoprotein C-II and apolipoprotein C-II can activate lipoprotein lipase. This chain is Apolipoprotein C-II (APOC2), found in Capra hircus aegagrus (Wild goat).